The chain runs to 747 residues: DNA damage checkpoint protein LCD1 (747 aa).

A phosphoserine mark is found at Ser10, Ser11, and Ser76. Residues 62 to 139 are a coiled coil; the sequence is NQLVNQLNKA…MEARGKSKRE (78 aa). The disordered stretch occupies residues 145 to 180; it reads KPPSTTLSTNTNTITPDSSSVAIEAKPQSPQSKKRK. Low complexity predominate over residues 146-160; the sequence is PPSTTLSTNTNTITP.

As to quaternary structure, forms a complex with MEC1. Post-translationally, phosphorylated by MEC1 in a cell cycle dependent manner and in response to DNA damage.

It localises to the cytoplasm. Its subcellular location is the nucleus. In terms of biological role, forms a complex with the serine/threonine kinase MEC1 which activates checkpoint signaling upon genotoxic stresses. The MEC1-LCD1 complex is recruited by the single-strand-binding protein complex RPA to DNA lesions in order to initiate the DNA repair by homologous recombination, after the MRX-complex and TEL1 are displaced. Required for the recruitment of MEC1 to DNA lesions, the activation of CHK1 and RAD53 kinases and phosphorylation of RAD9 in response to DNA damage. Required for cell growth and meiotic recombination. The protein is DNA damage checkpoint protein LCD1 (LCD1) of Saccharomyces cerevisiae (strain ATCC 204508 / S288c) (Baker's yeast).